Reading from the N-terminus, the 474-residue chain is Vacuolar basic amino acid transporter 2 (474 aa).

Residues 1 to 33 (MSISNWITTAYLITSTSFQPLYGSFSDALGRRN) lie on the Cytoplasmic side of the membrane. The helical transmembrane segment at 34 to 54 (CLFFANGAFTIGCLACGFSKN) threads the bilayer. Over 55–62 (IYMLSFMR) the chain is Vacuolar. Residues 63 to 85 (ALTGIGGGGLITLSTIVNSDVIP) traverse the membrane as a helical segment. Residues 86–97 (SSKRGIFQAFQN) are Cytoplasmic-facing. A helical transmembrane segment spans residues 98–118 (LLLGFGAICGASFGGTIASSI). Residues 119–121 (GWR) are Vacuolar-facing. A helical membrane pass occupies residues 122-142 (WCFLIQVPISVISSILMNYYV). The Cytoplasmic segment spans residues 143 to 167 (PNQKEYNRQNSSIFQNPGKILRDID). A helical transmembrane segment spans residues 168 to 188 (VMGSILIITGLTLQLLYLSLG). At 189-196 (CSTSKLSW) the chain is on the vacuolar side. Residues 197–217 (TSPSVLLLLVGSVIILLLFIL) traverse the membrane as a helical segment. The Cytoplasmic portion of the chain corresponds to 218 to 238 (HERKTSARAIIPMELVNSSYS). Residues 239–259 (VVVLSISILVGFASYAYLFTL) form a helical membrane-spanning segment. Residues 260 to 273 (PLFFQIVLGDSTAK) are Vacuolar-facing. The chain crosses the membrane as a helical span at residues 274-294 (AGLRLTIPSLFTPVGSLITGF). At 295 to 303 (SMSKYNCLR) the chain is on the cytoplasmic side. A helical transmembrane segment spans residues 304-324 (LLLYIGISLMFLGNFLFLFIE). Topologically, residues 325–331 (KTSPNWL) are vacuolar. A helical membrane pass occupies residues 332 to 352 (IGLFLIPANLGQGITFPTTLF). At 353–375 (TFIFMFSKSDQATATSTLYLFRS) the chain is on the cytoplasmic side. A helical membrane pass occupies residues 376 to 396 (IGSVWGVAISAGVIQLSFAGL). The Vacuolar segment spans residues 397–447 (LRSNLKGLLDENKIKKLIVQLSANSSYIGSLHGEVKNTVIKSFDEATKRAH). Asn-420 is a glycosylation site (N-linked (GlcNAc...) asparagine). A helical transmembrane segment spans residues 448-468 (LMSTLLSSLALILCILKDNLA). At 469 to 474 (KPKTRR) the chain is on the cytoplasmic side.

Belongs to the major facilitator superfamily.

It localises to the vacuole membrane. In terms of biological role, transporter required for vacuolar uptake of histidine, arginine and lysine and to a lesser extent tyrosine. The sequence is that of Vacuolar basic amino acid transporter 2 (VBA2) from Saccharomyces cerevisiae (strain ATCC 204508 / S288c) (Baker's yeast).